The following is a 112-amino-acid chain: C-C motif chemokine 27 (112 aa).

The signal sequence occupies residues 1-24 (MKGPPTFCSLLLLSLLLSPDPTAA). 2 disulfides stabilise this stretch: C33/C62 and C34/C77.

The protein belongs to the intercrine beta (chemokine CC) family. In terms of assembly, monomer, dimer, and tetramer. Heparin avidly promotes oligomerization. Interacts with TNFAIP6 (via Link domain). Testis, thymus, placenta, ovary and skin.

It is found in the secreted. Chemotactic factor that attracts skin-associated memory T-lymphocytes. May play a role in mediating homing of lymphocytes to cutaneous sites. Binds to CCR10. The chain is C-C motif chemokine 27 (CCL27) from Homo sapiens (Human).